The primary structure comprises 309 residues: Aspartate carbamoyltransferase catalytic subunit (309 aa).

The carbamoyl phosphate site is built by Arg-58 and Thr-59. Lys-87 lines the L-aspartate pocket. The carbamoyl phosphate site is built by Arg-108, His-136, and Gln-139. L-aspartate is bound by residues Arg-168 and Arg-229. Residues Leu-268 and Pro-269 each coordinate carbamoyl phosphate.

This sequence belongs to the aspartate/ornithine carbamoyltransferase superfamily. ATCase family. In terms of assembly, heterooligomer of catalytic and regulatory chains.

The catalysed reaction is carbamoyl phosphate + L-aspartate = N-carbamoyl-L-aspartate + phosphate + H(+). It functions in the pathway pyrimidine metabolism; UMP biosynthesis via de novo pathway; (S)-dihydroorotate from bicarbonate: step 2/3. Its function is as follows. Catalyzes the condensation of carbamoyl phosphate and aspartate to form carbamoyl aspartate and inorganic phosphate, the committed step in the de novo pyrimidine nucleotide biosynthesis pathway. This chain is Aspartate carbamoyltransferase catalytic subunit, found in Methanosarcina mazei (strain ATCC BAA-159 / DSM 3647 / Goe1 / Go1 / JCM 11833 / OCM 88) (Methanosarcina frisia).